An 84-amino-acid polypeptide reads, in one-letter code: uncharacterized protein (84 aa).

In terms of domain architecture, LITAF spans Met-1–Ile-83. Zn(2+) contacts are provided by Cys-21 and Cys-24. Residues Met-39 to Cys-61 are membrane-binding amphipathic helix. Zn(2+)-binding residues include Cys-71 and Cys-74.

Its subcellular location is the host membrane. This is an uncharacterized protein from Dryophytes versicolor (chameleon treefrog).